We begin with the raw amino-acid sequence, 191 residues long: Probable DNA-directed RNA polymerase subunit delta (191 aa).

Positions 14–83 (LSMIEVARAI…GENKWGLRSW (70 aa)) constitute an HTH HARE-type domain. The segment at 119–191 (EDAIDYRDDD…EDEEDEEPVL (73 aa)) is disordered.

In terms of assembly, RNAP is composed of a core of 2 alpha, a beta and a beta' subunits. The core is associated with a delta subunit and one of several sigma factors.

Participates in both the initiation and recycling phases of transcription. In the presence of the delta subunit, RNAP displays an increased specificity of transcription, a decreased affinity for nucleic acids, and an increased efficiency of RNA synthesis because of enhanced recycling. The protein is Probable DNA-directed RNA polymerase subunit delta of Streptococcus pyogenes serotype M6 (strain ATCC BAA-946 / MGAS10394).